A 545-amino-acid polypeptide reads, in one-letter code: tRNA-2-methylthio-N(6)-dimethylallyladenosine synthase (545 aa).

The interval 1 to 32 (MSSASPLARCCDEATPSAGPRAAQPPYHGPVT) is disordered. An MTTase N-terminal domain is found at 58 to 174 (RTYQVRTYGC…LPTLLERARH (117 aa)). [4Fe-4S] cluster contacts are provided by C67, C103, C137, C211, C215, and C218. The Radical SAM core domain maps to 197–433 (RESAYAAWVS…IALQEQISLE (237 aa)). The TRAM domain occupies 436-504 (RALVGQAVEV…PHHLIADAGV (69 aa)).

It belongs to the methylthiotransferase family. MiaB subfamily. Monomer. Requires [4Fe-4S] cluster as cofactor.

It localises to the cytoplasm. It carries out the reaction N(6)-dimethylallyladenosine(37) in tRNA + (sulfur carrier)-SH + AH2 + 2 S-adenosyl-L-methionine = 2-methylsulfanyl-N(6)-dimethylallyladenosine(37) in tRNA + (sulfur carrier)-H + 5'-deoxyadenosine + L-methionine + A + S-adenosyl-L-homocysteine + 2 H(+). Catalyzes the methylthiolation of N6-(dimethylallyl)adenosine (i(6)A), leading to the formation of 2-methylthio-N6-(dimethylallyl)adenosine (ms(2)i(6)A) at position 37 in tRNAs that read codons beginning with uridine. This is tRNA-2-methylthio-N(6)-dimethylallyladenosine synthase from Mycobacterium bovis (strain BCG / Pasteur 1173P2).